A 59-amino-acid polypeptide reads, in one-letter code: Single-pass membrane and coiled-coil domain-containing protein 4 (59 aa).

Positions 1 to 27 (MRQLKGKPKKETSRDKKERKQAMQEAR) are disordered. The segment covering 9–27 (KKETSRDKKERKQAMQEAR) has biased composition (basic and acidic residues). Residues 9 to 31 (KKETSRDKKERKQAMQEARRQIT) are a coiled coil. A helical membrane pass occupies residues 32–52 (TVVLPTLAVVVLLIVVFVYVA).

It belongs to the SMCO4 family.

It localises to the membrane. The protein is Single-pass membrane and coiled-coil domain-containing protein 4 (SMCO4) of Bos taurus (Bovine).